The sequence spans 456 residues: Putative F-box/LRR-repeat protein At5g02700 (456 aa).

The F-box domain occupies 26–72 (ADFINYMPDDILHHILSFIPTDLAMRTSVLSRRWRHVWCETPCLDIT). LRR repeat units follow at residues 126–154 (VRDF…DVTL), 177–202 (FCQI…TLDT), 206–224 (LERL…DINQ), 271–300 (LSPL…TVGE), and 330–355 (FVRS…RPST).

This Arabidopsis thaliana (Mouse-ear cress) protein is Putative F-box/LRR-repeat protein At5g02700.